Reading from the N-terminus, the 211-residue chain is NADH-quinone oxidoreductase subunit I (211 aa).

2 4Fe-4S ferredoxin-type domains span residues 90–119 (RLWE…IDTK) and 129–158 (TEYS…HGGE). 8 residues coordinate [4Fe-4S] cluster: Cys-99, Cys-102, Cys-105, Cys-109, Cys-138, Cys-141, Cys-144, and Cys-148.

It belongs to the complex I 23 kDa subunit family. As to quaternary structure, NDH-1 is composed of 14 different subunits. Subunits NuoA, H, J, K, L, M, N constitute the membrane sector of the complex. The cofactor is [4Fe-4S] cluster.

The protein localises to the cell inner membrane. The catalysed reaction is a quinone + NADH + 5 H(+)(in) = a quinol + NAD(+) + 4 H(+)(out). Its function is as follows. NDH-1 shuttles electrons from NADH, via FMN and iron-sulfur (Fe-S) centers, to quinones in the respiratory chain. The immediate electron acceptor for the enzyme in this species is believed to be ubiquinone. Couples the redox reaction to proton translocation (for every two electrons transferred, four hydrogen ions are translocated across the cytoplasmic membrane), and thus conserves the redox energy in a proton gradient. This is NADH-quinone oxidoreductase subunit I from Sulfurimonas denitrificans (strain ATCC 33889 / DSM 1251) (Thiomicrospira denitrificans (strain ATCC 33889 / DSM 1251)).